Reading from the N-terminus, the 173-residue chain is NADH-ubiquinone oxidoreductase chain 6 (173 aa).

5 helical membrane-spanning segments follow: residues 1–21 (MTYF…AVAS), 27–47 (YGVV…LSLG), 48–68 (VSFV…VVFV), 87–107 (VVGY…VGGF), and 139–159 (CGVG…FVVL).

The protein belongs to the complex I subunit 6 family.

It localises to the mitochondrion membrane. The enzyme catalyses a ubiquinone + NADH + 5 H(+)(in) = a ubiquinol + NAD(+) + 4 H(+)(out). Functionally, core subunit of the mitochondrial membrane respiratory chain NADH dehydrogenase (Complex I) that is believed to belong to the minimal assembly required for catalysis. Complex I functions in the transfer of electrons from NADH to the respiratory chain. The immediate electron acceptor for the enzyme is believed to be ubiquinone. The polypeptide is NADH-ubiquinone oxidoreductase chain 6 (MT-ND6) (Aethia pusilla (Least auklet)).